The chain runs to 440 residues: Chromosome partition protein MukF (440 aa).

A leucine-zipper region spans residues 208 to 236 (LSETSGTLRELQDTLEAAGDKLQANLLRI).

It belongs to the MukF family. As to quaternary structure, interacts, and probably forms a ternary complex, with MukE and MukB via its C-terminal region. The complex formation is stimulated by calcium or magnesium. It is required for an interaction between MukE and MukB.

It is found in the cytoplasm. The protein localises to the nucleoid. Its function is as follows. Involved in chromosome condensation, segregation and cell cycle progression. May participate in facilitating chromosome segregation by condensation DNA from both sides of a centrally located replisome during cell division. Not required for mini-F plasmid partitioning. Probably acts via its interaction with MukB and MukE. Overexpression results in anucleate cells. It has a calcium binding activity. This Salmonella arizonae (strain ATCC BAA-731 / CDC346-86 / RSK2980) protein is Chromosome partition protein MukF.